We begin with the raw amino-acid sequence, 102 residues long: Small ribosomal subunit protein uS10 (102 aa).

Belongs to the universal ribosomal protein uS10 family. In terms of assembly, part of the 30S ribosomal subunit.

Involved in the binding of tRNA to the ribosomes. The polypeptide is Small ribosomal subunit protein uS10 (Paramagnetospirillum magneticum (strain ATCC 700264 / AMB-1) (Magnetospirillum magneticum)).